We begin with the raw amino-acid sequence, 527 residues long: SusD-like protein P25 (527 aa).

The first 15 residues, 1–15 (MKIQNIIVYVFLIFS), serve as a signal peptide directing secretion. Cys16 carries N-palmitoyl cysteine lipidation. Cys16 carries S-diacylglycerol cysteine lipidation.

This sequence belongs to the SusD family.

It is found in the cell outer membrane. In terms of biological role, polysaccharide-binding protein probably involved in ulvan degradation. Ulvan is the main polysaccharide component of the Ulvales (green seaweed) cell wall. It is composed of disaccharide building blocks comprising 3-sulfated rhamnose (Rha3S) linked to D-glucuronic acid (GlcA), L-iduronic acid (IduA), or D-xylose (Xyl). The SusD-like protein may mediate ulvan oligomer-binding before transport in the periplasm for further degradation. In Formosa agariphila (strain DSM 15362 / KCTC 12365 / LMG 23005 / KMM 3901 / M-2Alg 35-1), this protein is SusD-like protein P25.